Here is a 163-residue protein sequence, read N- to C-terminus: NADH-quinone oxidoreductase subunit I (163 aa).

4Fe-4S ferredoxin-type domains are found at residues 54-84 (LRRYPNGEERCIACKLCEAVCPALAISIESD) and 94-123 (TRYDIDLTKCIFCGFCEEACPVDAIVETHI). [4Fe-4S] cluster contacts are provided by cysteine 64, cysteine 67, cysteine 70, cysteine 74, cysteine 103, cysteine 106, cysteine 109, and cysteine 113.

It belongs to the complex I 23 kDa subunit family. As to quaternary structure, NDH-1 is composed of 14 different subunits. Subunits NuoA, H, J, K, L, M, N constitute the membrane sector of the complex. The cofactor is [4Fe-4S] cluster.

It localises to the cell inner membrane. It carries out the reaction a quinone + NADH + 5 H(+)(in) = a quinol + NAD(+) + 4 H(+)(out). Functionally, NDH-1 shuttles electrons from NADH, via FMN and iron-sulfur (Fe-S) centers, to quinones in the respiratory chain. The immediate electron acceptor for the enzyme in this species is believed to be ubiquinone. Couples the redox reaction to proton translocation (for every two electrons transferred, four hydrogen ions are translocated across the cytoplasmic membrane), and thus conserves the redox energy in a proton gradient. The protein is NADH-quinone oxidoreductase subunit I of Cupriavidus metallidurans (strain ATCC 43123 / DSM 2839 / NBRC 102507 / CH34) (Ralstonia metallidurans).